The sequence spans 619 residues: Dihydroxy-acid dehydratase (619 aa).

Position 81 (D81) interacts with Mg(2+). C122 is a [2Fe-2S] cluster binding site. Residues D123 and K124 each contribute to the Mg(2+) site. K124 is modified (N6-carboxylysine). C195 contributes to the [2Fe-2S] cluster binding site. A Mg(2+)-binding site is contributed by E494. S520 (proton acceptor) is an active-site residue.

This sequence belongs to the IlvD/Edd family. As to quaternary structure, homodimer. The cofactor is [2Fe-2S] cluster. Mg(2+) is required as a cofactor.

The enzyme catalyses (2R)-2,3-dihydroxy-3-methylbutanoate = 3-methyl-2-oxobutanoate + H2O. It carries out the reaction (2R,3R)-2,3-dihydroxy-3-methylpentanoate = (S)-3-methyl-2-oxopentanoate + H2O. It functions in the pathway amino-acid biosynthesis; L-isoleucine biosynthesis; L-isoleucine from 2-oxobutanoate: step 3/4. The protein operates within amino-acid biosynthesis; L-valine biosynthesis; L-valine from pyruvate: step 3/4. Functions in the biosynthesis of branched-chain amino acids. Catalyzes the dehydration of (2R,3R)-2,3-dihydroxy-3-methylpentanoate (2,3-dihydroxy-3-methylvalerate) into 2-oxo-3-methylpentanoate (2-oxo-3-methylvalerate) and of (2R)-2,3-dihydroxy-3-methylbutanoate (2,3-dihydroxyisovalerate) into 2-oxo-3-methylbutanoate (2-oxoisovalerate), the penultimate precursor to L-isoleucine and L-valine, respectively. This is Dihydroxy-acid dehydratase from Shewanella sp. (strain ANA-3).